Consider the following 169-residue polypeptide: Peptide methionine sulfoxide reductase MsrA (169 aa).

Cys-10 is an active-site residue.

Belongs to the MsrA Met sulfoxide reductase family.

It carries out the reaction L-methionyl-[protein] + [thioredoxin]-disulfide + H2O = L-methionyl-(S)-S-oxide-[protein] + [thioredoxin]-dithiol. The enzyme catalyses [thioredoxin]-disulfide + L-methionine + H2O = L-methionine (S)-S-oxide + [thioredoxin]-dithiol. Has an important function as a repair enzyme for proteins that have been inactivated by oxidation. Catalyzes the reversible oxidation-reduction of methionine sulfoxide in proteins to methionine. This chain is Peptide methionine sulfoxide reductase MsrA, found in Streptococcus pyogenes serotype M3 (strain ATCC BAA-595 / MGAS315).